The chain runs to 468 residues: 3-isopropylmalate dehydratase large subunit (468 aa).

[4Fe-4S] cluster-binding residues include Cys-347, Cys-407, and Cys-410.

This sequence belongs to the aconitase/IPM isomerase family. LeuC type 1 subfamily. Heterodimer of LeuC and LeuD. Requires [4Fe-4S] cluster as cofactor.

The enzyme catalyses (2R,3S)-3-isopropylmalate = (2S)-2-isopropylmalate. The protein operates within amino-acid biosynthesis; L-leucine biosynthesis; L-leucine from 3-methyl-2-oxobutanoate: step 2/4. Functionally, catalyzes the isomerization between 2-isopropylmalate and 3-isopropylmalate, via the formation of 2-isopropylmaleate. This chain is 3-isopropylmalate dehydratase large subunit, found in Rippkaea orientalis (strain PCC 8801 / RF-1) (Cyanothece sp. (strain PCC 8801)).